Consider the following 440-residue polypeptide: MDRFSNLPDDVIYHIVSFLSAKEATCLKFVSKNFQNLVTIKRNVVFHHWESFKNFVDGLLAEPASYRIKRFSLKLVSMDFAQYNIVNDCLCNVLKRGVLDLELDINVKEDYILPSDVFTCKTVVRLKLGCGFVIDILPKNALLPALKTLILDSVRFYASDGCAFTRLLSASPVLEELVIDRLNWEHWKGSRFVSSPTLKRLTLRRKEWEPEPETWTDFESVSFDTPSLAYLKYKDVIPYGYPIVNLNSIVEARLTLPREVEYDYWLNRSADPSNLIRGLKNVEILSIKVLHTMDLLFYNFKEAVPVFENLIHLSVTSEADFCWDPLQILLEKSPNLKTLTIEGPLHYNFYEKLDLEAVCECLLGYSFLLSCPIKVLKITEFVGDIGEIVQMKHVLGKLPCLELLEVHVQARRDDKKLQIMADLLMLPRTSSKCKVKVHFS.

An F-box domain is found at 1-52 (MDRFSNLPDDVIYHIVSFLSAKEATCLKFVSKNFQNLVTIKRNVVFHHWESF). 7 LRR repeats span residues 4-31 (FSNLPDDVIYHIVSFLSAKEATCLKFVS), 126-153 (LKLGCGFVIDILPKNALLPALKTLILDS), 156-181 (FYASDGCAFTRLLSASPVLEELVIDR), 194-205 (SSPTLKRLTLRR), 210-235 (PEPETWTDFESVSFDTPSLAYLKYKD), 264-289 (YWLNRSADPSNLIRGLKNVEILSIKV), and 318-343 (EADFCWDPLQILLEKSPNLKTLTIEG).

This Arabidopsis thaliana (Mouse-ear cress) protein is Putative F-box/LRR-repeat protein At5g15620.